Consider the following 1260-residue polypeptide: Agglutinin-like protein 1 (1260 aa).

An N-terminal signal peptide occupies residues 1-17 (MLQQFTLLFLYLSIASA). Disulfide bonds link C73-C150, C96-C112, C205-C298, and C227-C256. A run of 10 repeats spans residues 433-468 (SPNPTVSTTEYWSQSFATTTTVTAPPGGTDTVIIRE), 469-504 (PPNHTVTTTEYWSQSFATTTTVTAPPGGTDSVIIRE), 505-540 (PPNPTVTTTEYWSQSFATTTTVTAPPGGTDSVIIRE), 541-576 (PPNPTVTTTEYWSQSYATTTTVTAPPGGTDSVIIRE), 577-612 (PPNHTVTTTEYWSQSYATTTTVTAPPGGTDTVIIRE), 613-648 (PPNHTVTTTEYWSQSFATTTTVTGPPSGTDTVIIRE), 649-684 (PPNPTVTTTEYWSQSYATTTTITAPPGETDTVLIRE), 685-720 (PPNHTVTTTEYWSQSYATTTTVTAPPGETDTVLIRE), 721-756 (PPNHTVTTTEYWSQSYATTTTVTAPPGGTDTVIIRE), and 757-792 (PPNPTVTTTEYWSQSFATTTTVTAPPGGTDTVIIYE). Residues 433–792 (SPNPTVSTTE…GGTDTVIIYE (360 aa)) form a 10 X 36 AA tandem repeats region. N-linked (GlcNAc...) asparagine glycosylation is present at N471. N-linked (GlcNAc...) asparagine glycosylation is found at N579 and N615. 2 N-linked (GlcNAc...) asparagine glycosylation sites follow: N687 and N723. N820, N886, N918, and N973 each carry an N-linked (GlcNAc...) asparagine glycan. 2 stretches are compositionally biased toward polar residues: residues 896 to 918 (PTASTMSDSLSSTDGISATSSDN) and 964 to 979 (KVTFTSNGDNQSGTHD). Disordered regions lie at residues 896 to 924 (PTASTMSDSLSSTDGISATSSDNVSKSGV) and 954 to 1226 (SIPS…SSSP). Positions 980 to 995 (SQSTSTEIEIVTTSST) are enriched in low complexity. The stretch at 983–1043 (TSTEIEIVTT…TTSQPTGDNG (61 aa)) is one 2-1 repeat. The tract at residues 983 to 1152 (TSTEIEIVTT…ATTQATNENG (170 aa)) is 2 X 26 AA approximate repeats. The span at 1002 to 1062 (VSSNTDLTSE…PTVATSTLAS (61 aa)) shows a compositional bias: polar residues. N-linked (GlcNAc...) asparagine glycosylation is found at N1045 and N1068. The span at 1073–1090 (HESASTSLKPSMGENSGL) shows a compositional bias: polar residues. Low complexity predominate over residues 1091–1110 (TTSTEIEATTTSPTEAPSPA). The stretch at 1092–1152 (TSTEIEATTT…ATTQATNENG (61 aa)) is one 2-2 repeat. Residues 1111 to 1154 (VSSGTDVTTEPTDTREQPTTLSTTSKTNSESVATTQATNENGGK) are compositionally biased toward polar residues. Composition is skewed to low complexity over residues 1155–1176 (SPSTDLTSSLTTGTSASTSANS) and 1197–1226 (SHSTSVTNSNSIVSNTPQTTLSQQVTSSSP).

It belongs to the ALS family. N-glycosylated and O-glycosylated. In terms of processing, the GPI-anchor is attached to the protein in the endoplasmic reticulum and serves to target the protein to the cell surface. There, the glucosamine-inositol phospholipid moiety is cleaved off and the GPI-modified mannoprotein is covalently attached via its lipidless GPI glycan remnant to the 1,6-beta-glucan of the outer cell wall layer.

It localises to the cell membrane. The protein localises to the secreted. Its subcellular location is the cell wall. In terms of biological role, major cell surface adhesion protein which mediates both yeast-to-host tissue adherence and yeast aggregation. Acts as a downstream effector of the EFG1 regulatory pathway. Required for rapamycin-induced aggregation of C.albicans. Binds glycans and mediates adherence to endothelial and epithelial cells, thereby playing an important role in the pathogenesis of C.albicans infections. This Candida albicans (Yeast) protein is Agglutinin-like protein 1 (ALS1).